The primary structure comprises 193 residues: Mediator of RNA polymerase II transcription subunit 20 (193 aa).

This sequence belongs to the Mediator complex subunit 20 family. Component of the Mediator complex.

The protein localises to the nucleus. In terms of biological role, component of the Mediator complex, a coactivator involved in the regulated transcription of nearly all RNA polymerase II-dependent genes. Mediator functions as a bridge to convey information from gene-specific regulatory proteins to the basal RNA polymerase II transcription machinery. The Mediator complex, having a compact conformation in its free form, is recruited to promoters by direct interactions with regulatory proteins and serves for the assembly of a functional preinitiation complex with RNA polymerase II and the general transcription factors. The polypeptide is Mediator of RNA polymerase II transcription subunit 20 (med20) (Schizosaccharomyces pombe (strain 972 / ATCC 24843) (Fission yeast)).